Here is a 146-residue protein sequence, read N- to C-terminus: MSHKILLVNGPNLNLLGRREPSVYGHQTLADIVAELNQQAKLAEVELEHIQSNAEFELINAIHATDAQMIIINPAAFTHTSVALRDALLGVAIPFFEVHLSNVHAREAFRHHSYFSDKAIGVICGFGSQGYEFALAAAIKRLNQPQ.

Tyr-24 serves as the catalytic Proton acceptor. Substrate-binding residues include Asn-73, His-79, and Asp-86. The active-site Proton donor is His-99. Substrate is bound by residues 100–101 (LS) and Arg-110.

This sequence belongs to the type-II 3-dehydroquinase family. In terms of assembly, homododecamer.

It carries out the reaction 3-dehydroquinate = 3-dehydroshikimate + H2O. The protein operates within metabolic intermediate biosynthesis; chorismate biosynthesis; chorismate from D-erythrose 4-phosphate and phosphoenolpyruvate: step 3/7. In terms of biological role, catalyzes a trans-dehydration via an enolate intermediate. This Shewanella baltica (strain OS223) protein is 3-dehydroquinate dehydratase.